The chain runs to 444 residues: Phosphoglucosamine mutase (444 aa).

The active-site Phosphoserine intermediate is S104. Residues S104, D243, D245, and D247 each contribute to the Mg(2+) site. S104 carries the phosphoserine modification.

This sequence belongs to the phosphohexose mutase family. Mg(2+) is required as a cofactor. Activated by phosphorylation.

It catalyses the reaction alpha-D-glucosamine 1-phosphate = D-glucosamine 6-phosphate. Its function is as follows. Catalyzes the conversion of glucosamine-6-phosphate to glucosamine-1-phosphate. The polypeptide is Phosphoglucosamine mutase (Neisseria meningitidis serogroup C (strain 053442)).